The sequence spans 167 residues: Transcription initiation factor TFIID subunit 10 (167 aa).

2 disordered regions span residues 1–56 (MASD…EESE) and 119–139 (TTNI…NPKD). The span at 41-56 (EQPDVEEVPLTTEESE) shows a compositional bias: acidic residues. Residues 130–139 (SSKDKKNPKD) are compositionally biased toward basic and acidic residues.

Belongs to the TAF10 family. As to quaternary structure, belongs to the TFIID complex which is composed of TATA binding protein (Tbp) and a number of TBP-associated factors (TAFs). Also a member of the histone acetylase (HAT) complex. At embryonic stage 9, highest expression is detected within the ectoderm, ventral chord, and anterior foregut primordium. Later in development preferential expression is in the foregut, proventriculus, and central nervous system. Coexpressed with Taf10b in the lateral epidermis and anal plate.

It is found in the cytoplasm. Its subcellular location is the nucleus. TFIID is a multimeric protein complex that plays a central role in mediating promoter responses to various activators and repressors. This Drosophila melanogaster (Fruit fly) protein is Transcription initiation factor TFIID subunit 10.